Here is a 576-residue protein sequence, read N- to C-terminus: Plant intracellular Ras-group-related LRR protein 4 (576 aa).

The span at A130–A151 shows a compositional bias: low complexity. Positions A130 to V181 are disordered. Positions S160–R180 are enriched in polar residues. 11 LRR repeats span residues L272–L295, F296–L318, S320–L341, L342–L364, R366–C387, S389–L410, E411–L433, T434–A456, S458–L481, E482–N503, and K505–K527. The short motif at G528 to Y535 is the GVYW; degenerate element.

The protein belongs to the SHOC2 family. As to expression, widely expressed.

Leucine-rich repeat protein that likely mediates protein interactions, possibly in the context of signal transduction. The polypeptide is Plant intracellular Ras-group-related LRR protein 4 (IRL4) (Oryza sativa subsp. japonica (Rice)).